The following is a 461-amino-acid chain: A-type ATP synthase subunit B (461 aa).

The protein belongs to the ATPase alpha/beta chains family. Has multiple subunits with at least A(3), B(3), C, D, E, F, H, I and proteolipid K(x).

It is found in the cell membrane. Its function is as follows. Component of the A-type ATP synthase that produces ATP from ADP in the presence of a proton gradient across the membrane. The B chain is a regulatory subunit. This chain is A-type ATP synthase subunit B, found in Methanoculleus marisnigri (strain ATCC 35101 / DSM 1498 / JR1).